Here is a 196-residue protein sequence, read N- to C-terminus: ATP-dependent Clp protease proteolytic subunit (196 aa).

The active-site Nucleophile is the serine 99. The active site involves histidine 124.

The protein belongs to the peptidase S14 family. As to quaternary structure, fourteen ClpP subunits assemble into 2 heptameric rings which stack back to back to give a disk-like structure with a central cavity, resembling the structure of eukaryotic proteasomes.

It localises to the cytoplasm. The enzyme catalyses Hydrolysis of proteins to small peptides in the presence of ATP and magnesium. alpha-casein is the usual test substrate. In the absence of ATP, only oligopeptides shorter than five residues are hydrolyzed (such as succinyl-Leu-Tyr-|-NHMec, and Leu-Tyr-Leu-|-Tyr-Trp, in which cleavage of the -Tyr-|-Leu- and -Tyr-|-Trp bonds also occurs).. Its function is as follows. Cleaves peptides in various proteins in a process that requires ATP hydrolysis. Has a chymotrypsin-like activity. Plays a major role in the degradation of misfolded proteins. This is ATP-dependent Clp protease proteolytic subunit from Helicobacter pylori (strain ATCC 700392 / 26695) (Campylobacter pylori).